The primary structure comprises 450 residues: MSFLWAKEFCVLKYPYKLFITHKFSYLLRFETVTLNNIRSPQFYAKLTFSHHQPTVSGTMSTELKFISKYLQISIPETKEGPVSSLFKAVSEQKPELLGNTDFEKAQILEWTTKAFSPIETQSIVEQLDEFLKSSTFIAQDSGISVADLAVYARIHSYICGLSAKEGYKLNNVCRWFDFIQHQESVMEAANSMSMKLANIDLNAPKIQRPSVIKKDKKEKKEGKPSQEASVKSVEKAPKGLEGAKKEKQNKKEKKDKKDKKDKKEKAPKEPPKAATPVPSMIDFRIGFIEKAVKHPNADSLYVSTIHCGDAEGPRTVCSGLVKYIPLEQMQQRKVIVVANLKPVNMRSVKSQAMVFCASSPDKSVVEFVLPPENAEIGDRLTFEGFDTEEPEAQLNPKRKIWEAIQPGFTSGEDLICGYKDESGLHRLFVKGKKDLGFCKAQTVVNGTLS.

Residues 208-278 (QRPSVIKKDK…KEPPKAATPV (71 aa)) form a disordered region. Basic and acidic residues-rich tracts occupy residues 213–225 (IKKD…EGKP) and 233–247 (SVEK…AKKE). A compositionally biased stretch (basic residues) spans 248 to 261 (KQNKKEKKDKKDKK). Residues 262-272 (DKKEKAPKEPP) show a composition bias toward basic and acidic residues. A tRNA-binding domain is found at 278 to 382 (VPSMIDFRIG…ENAEIGDRLT (105 aa)).

This sequence belongs to the tRNA-aminoacylation cofactor ARC1 family. As to quaternary structure, component of a yeast aminoacyl-tRNA synthase (aaRS) complex formed by methionyl-tRNA synthase, glutamyl-tRNA synthase and the tRNA aminoacylation cofactor arc1 in a stoichiometric complex. Interacts with rar1/mes1 and gus1.

The protein localises to the cytoplasm. Functionally, binds to tRNA and functions as a cofactor for the methionyl-tRNA synthetase (MetRS) and glutamyl-tRNA synthetase (GluRS). Forms a complex with MetRS and GluRS and increases their affinity for cognate tRNAs due to the presence of a tRNA binding domain in its middle and C-terminal part. This is tRNA-aminoacylation cofactor arc1 from Schizosaccharomyces pombe (strain 972 / ATCC 24843) (Fission yeast).